A 312-amino-acid polypeptide reads, in one-letter code: Methionyl-tRNA formyltransferase (312 aa).

109–112 (SLLP) serves as a coordination point for (6S)-5,6,7,8-tetrahydrofolate.

It belongs to the Fmt family.

It carries out the reaction L-methionyl-tRNA(fMet) + (6R)-10-formyltetrahydrofolate = N-formyl-L-methionyl-tRNA(fMet) + (6S)-5,6,7,8-tetrahydrofolate + H(+). Its function is as follows. Attaches a formyl group to the free amino group of methionyl-tRNA(fMet). The formyl group appears to play a dual role in the initiator identity of N-formylmethionyl-tRNA by promoting its recognition by IF2 and preventing the misappropriation of this tRNA by the elongation apparatus. The sequence is that of Methionyl-tRNA formyltransferase from Anaeromyxobacter sp. (strain K).